The chain runs to 236 residues: Phosphoribosylaminoimidazole-succinocarboxamide synthase (236 aa).

It belongs to the SAICAR synthetase family.

The catalysed reaction is 5-amino-1-(5-phospho-D-ribosyl)imidazole-4-carboxylate + L-aspartate + ATP = (2S)-2-[5-amino-1-(5-phospho-beta-D-ribosyl)imidazole-4-carboxamido]succinate + ADP + phosphate + 2 H(+). Its pathway is purine metabolism; IMP biosynthesis via de novo pathway; 5-amino-1-(5-phospho-D-ribosyl)imidazole-4-carboxamide from 5-amino-1-(5-phospho-D-ribosyl)imidazole-4-carboxylate: step 1/2. This is Phosphoribosylaminoimidazole-succinocarboxamide synthase from Chlorobium phaeobacteroides (strain BS1).